We begin with the raw amino-acid sequence, 190 residues long: MEALQQKIREEGIVLSDQVLKVDAFLNHQIDPALMQLIGDEFARLFADSGVTKIVTIEASGIAPAVMTGLKLGVPVIFARKHQSLTLTENLLTASVYSFTKQTENTVAISPRHLNSSDRVLVIDDFLANGKASQALISIIKQAGATVAGLGIVIEKSFQGGRAELDSQGYRVESLARVKSLEGGVVTFIE.

Positions 20 and 27 each coordinate xanthine. 128 to 132 is a 5-phospho-alpha-D-ribose 1-diphosphate binding site; that stretch reads ANGKA. Lys156 provides a ligand contact to xanthine.

The protein belongs to the purine/pyrimidine phosphoribosyltransferase family. Xpt subfamily. As to quaternary structure, homodimer.

Its subcellular location is the cytoplasm. The enzyme catalyses XMP + diphosphate = xanthine + 5-phospho-alpha-D-ribose 1-diphosphate. The protein operates within purine metabolism; XMP biosynthesis via salvage pathway; XMP from xanthine: step 1/1. Functionally, converts the preformed base xanthine, a product of nucleic acid breakdown, to xanthosine 5'-monophosphate (XMP), so it can be reused for RNA or DNA synthesis. The protein is Xanthine phosphoribosyltransferase of Pseudomonas entomophila (strain L48).